The sequence spans 254 residues: NAD-dependent protein deacetylase 1 (254 aa).

The Deacetylase sirtuin-type domain occupies 3 to 252; it reads VDFTTDELDE…PKLLDRLRGM (250 aa). NAD(+)-binding residues include A29, T33, F40, R41, Q105, V107, D108, and H123. Nicotinamide is bound at residue F40. Nicotinamide-binding residues include V107 and D108. The active-site Proton acceptor is the H123. Positions 131, 134, 154, and 157 each coordinate Zn(2+). Residues T195, S196, and N220 each coordinate NAD(+).

It belongs to the sirtuin family. Class U subfamily. The cofactor is Zn(2+).

It localises to the cytoplasm. The enzyme catalyses N(6)-acetyl-L-lysyl-[protein] + NAD(+) + H2O = 2''-O-acetyl-ADP-D-ribose + nicotinamide + L-lysyl-[protein]. In terms of biological role, NAD-dependent protein deacetylase which modulates the activities of several enzymes which are inactive in their acetylated form. Deacetylates the N-terminal lysine residue of Alba, the major archaeal chromatin protein and that, in turn, increases Alba's DNA binding affinity, thereby repressing transcription. This chain is NAD-dependent protein deacetylase 1, found in Pyrobaculum aerophilum (strain ATCC 51768 / DSM 7523 / JCM 9630 / CIP 104966 / NBRC 100827 / IM2).